The primary structure comprises 83 residues: MKTSMFLTLTGLVLLFVVCYASESEEKEFPKELLSSIFAADSDFKVEERGCLGDKCDYNNGCCSGYVCPRTWKWCVLAGPWRR.

The first 21 residues, 1 to 21 (MKTSMFLTLTGLVLLFVVCYA), serve as a signal peptide directing secretion. A propeptide spanning residues 22–49 (SESEEKEFPKELLSSIFAADSDFKVEER) is cleaved from the precursor. Intrachain disulfides connect C51–C63, C56–C68, and C62–C75.

Belongs to the neurotoxin 10 (Hwtx-1) family. 51 (Hntx-8) subfamily. Hntx-8 sub-subfamily. In terms of tissue distribution, expressed by the venom gland.

It is found in the secreted. Functionally, agglutinates erythrocytes. The chain is U5-theraphotoxin-Hs1d from Cyriopagopus schmidti (Chinese bird spider).